The following is a 228-amino-acid chain: 6-carboxyhexanoate--CoA ligase (228 aa).

Belongs to the BioW family. As to quaternary structure, homodimer. Mg(2+) is required as a cofactor.

It catalyses the reaction heptanedioate + ATP + CoA = 6-carboxyhexanoyl-CoA + AMP + diphosphate. The protein operates within metabolic intermediate metabolism; pimeloyl-CoA biosynthesis; pimeloyl-CoA from pimelate: step 1/1. Its function is as follows. Catalyzes the transformation of pimelate into pimeloyl-CoA with concomitant hydrolysis of ATP to AMP. This Staphylococcus epidermidis (strain ATCC 12228 / FDA PCI 1200) protein is 6-carboxyhexanoate--CoA ligase.